We begin with the raw amino-acid sequence, 362 residues long: Serine/threonine-protein kinase SRK2D (362 aa).

A Protein kinase domain is found at 23–279 (YDFVKDIGSG…IPEITSDKWF (257 aa)). ATP contacts are provided by residues 29–37 (IGSGNFGVA) and lysine 52. The active-site Proton acceptor is aspartate 142.

Belongs to the protein kinase superfamily. Ser/Thr protein kinase family. As to quaternary structure, interacts with ABI1. Interacts with I-2, TOPP1 and TOPP2. Interacts with FREE1 (via C-terminus). In terms of tissue distribution, expressed in seeds, seedlings, roots (especially in tips), stems, leaves, shoots, flowers and siliques.

The enzyme catalyses L-seryl-[protein] + ATP = O-phospho-L-seryl-[protein] + ADP + H(+). The catalysed reaction is L-threonyl-[protein] + ATP = O-phospho-L-threonyl-[protein] + ADP + H(+). Together with SRK2I, key component and activator of the abscisic acid (ABA) signaling pathway that regulates numerous ABA responses, such as seed germination, Pro accumulation, root growth inhibition, dormancy and seedling growth, and, to a lesser extent, stomatal closure. In response to ABA, phosphorylates the ESCRT-I complex component FREE1, which is required for ABA-induced FREE1 nuclear import. The sequence is that of Serine/threonine-protein kinase SRK2D (SRK2D) from Arabidopsis thaliana (Mouse-ear cress).